Here is a 358-residue protein sequence, read N- to C-terminus: Protein Wnt-8 (358 aa).

Residues 1-22 (MQNTTLFILATLLIFCPFFTAS) form the signal peptide. A disulfide bridge connects residues cysteine 55 and cysteine 66. The N-linked (GlcNAc...) asparagine glycan is linked to asparagine 104. 10 disulfides stabilise this stretch: cysteine 105–cysteine 113, cysteine 115–cysteine 133, cysteine 181–cysteine 195, cysteine 183–cysteine 190, cysteine 260–cysteine 298, cysteine 276–cysteine 291, cysteine 295–cysteine 337, cysteine 313–cysteine 328, cysteine 315–cysteine 325, and cysteine 320–cysteine 321. A lipid anchor (O-palmitoleoyl serine) is attached at serine 187. Asparagine 263 and asparagine 282 each carry an N-linked (GlcNAc...) asparagine glycan.

This sequence belongs to the Wnt family. As to quaternary structure, homooligomer; disulfide-linked, leading to inactivation. Interacts with the long chain of cer1. In terms of processing, palmitoleoylation is required for efficient binding to frizzled receptors. Depalmitoleoylation leads to Wnt signaling pathway inhibition. Post-translationally, proteolytic processing by tiki1 and tiki2 promotes oxidation and formation of large disulfide-bond oligomers, leading to inactivation of wnt8.

The protein resides in the secreted. The protein localises to the extracellular space. It is found in the extracellular matrix. In terms of biological role, ligand for members of the frizzled family of seven transmembrane receptors. Plays a role in ventral mesodermal patterning during embryogenesis. Mimics Nieuwkoop center activity. Causes dorsal mesodermal differentiation of animal cap ectoderm when coexpressed with noggin and nuclear, sequence-specific DNA-binding protein xBra. None of these molecules causes dorsal mesoderm formation when expressed alone. In Xenopus laevis (African clawed frog), this protein is Protein Wnt-8 (wnt8).